The primary structure comprises 281 residues: uncharacterized protein (281 aa).

Positions 242-281 (IDKQSRKKNIIREINDIKSKINDLSNYMDNLISELDDLFD) form a coiled coil.

This is an uncharacterized protein from Acanthamoeba polyphaga (Amoeba).